We begin with the raw amino-acid sequence, 801 residues long: Na(+)/H(+) antiporter subunit A (801 aa).

Helical transmembrane passes span 4–21 (LHLA…IPFL), 28–50 (VHTG…PMIR), 80–102 (GLLF…IFYL), 109–128 (LGPF…GVVL), 132–154 (VMVL…GYWY), 166–188 (SLLI…YLIT), 203–222 (IAGH…GAFT), 229–251 (FYIW…HSAT), 266–288 (IFAF…MVWG), 301–323 (ILAF…SAAA), 338–360 (AAIF…VGII), 372–394 (LGGL…FSMA), 428–450 (VLFP…KLLF), 471–493 (VGML…FPNI), 526–548 (GVTT…YLSL), 594–616 (YLLY…KGGF), 626–647 (IGVY…TVFA), 654–671 (IIAL…FVIF), 676–698 (LALT…FYHL), 710–732 (FRMT…GIAS), and 772–789 (MFEI…YSMI).

This sequence belongs to the CPA3 antiporters (TC 2.A.63) subunit A family. In terms of assembly, forms a heterooligomeric complex that consists of seven subunits: MrpA, MrpB, MrpC, MrpD, MrpE, MrpF and MrpG.

It localises to the cell membrane. In terms of biological role, mrp complex is a Na(+)/H(+) antiporter that is considered to be the major Na(+) excretion system in B.subtilis. Has a major role in Na(+) resistance and a minor role in Na(+)- and K(+)-dependent pH homeostasis as compared to TetB. MrpA may be the actual Na(+)/H(+) antiporter, although the six other Mrp proteins are all required for Na(+)/H(+) antiport activity and Na(+) resistance. MrpA is required for initiation of sporulation when external Na(+) concentration increases. Also transports Li(+) but not K(+), Ca(2+) or Mg(2+). In Bacillus subtilis (strain 168), this protein is Na(+)/H(+) antiporter subunit A (mrpA).